A 158-amino-acid chain; its full sequence is Probable transcription regulator ArfM (158 aa).

Functionally, activates, in anaerobic conditions, the transcription of the fermentative operons lctEP and alsDS, of the hmp gene encoding a flavohemoglobin-like protein, the nitrite reductase operon nasDE and the heme biosynthesis genes hemN and hemZ. The protein is Probable transcription regulator ArfM (arfM) of Bacillus subtilis (strain 168).